Consider the following 65-residue polypeptide: Large ribosomal subunit protein bL35 (65 aa).

This sequence belongs to the bacterial ribosomal protein bL35 family.

This Pectobacterium atrosepticum (strain SCRI 1043 / ATCC BAA-672) (Erwinia carotovora subsp. atroseptica) protein is Large ribosomal subunit protein bL35.